The primary structure comprises 448 residues: Trigger factor (448 aa).

Positions 162 to 243 (DDFAIIDIEA…VQQTKERKLP (82 aa)) constitute a PPIase FKBP-type domain. The disordered stretch occupies residues 426–448 (DEGKAVDPSEYFGEEEESAEESE). Positions 437–448 (FGEEEESAEESE) are enriched in acidic residues.

Belongs to the FKBP-type PPIase family. Tig subfamily.

The protein resides in the cytoplasm. The enzyme catalyses [protein]-peptidylproline (omega=180) = [protein]-peptidylproline (omega=0). Its function is as follows. Involved in protein export. Acts as a chaperone by maintaining the newly synthesized protein in an open conformation. Functions as a peptidyl-prolyl cis-trans isomerase. This Corynebacterium diphtheriae (strain ATCC 700971 / NCTC 13129 / Biotype gravis) protein is Trigger factor.